A 637-amino-acid polypeptide reads, in one-letter code: Threonine--tRNA ligase (637 aa).

The TGS domain maps to Met-1–Thr-65. The catalytic stretch occupies residues Asp-246 to Pro-537. Residues Cys-337, His-388, and His-514 each coordinate Zn(2+).

The protein belongs to the class-II aminoacyl-tRNA synthetase family. As to quaternary structure, homodimer. Requires Zn(2+) as cofactor.

The protein localises to the cytoplasm. The enzyme catalyses tRNA(Thr) + L-threonine + ATP = L-threonyl-tRNA(Thr) + AMP + diphosphate + H(+). In terms of biological role, catalyzes the attachment of threonine to tRNA(Thr) in a two-step reaction: L-threonine is first activated by ATP to form Thr-AMP and then transferred to the acceptor end of tRNA(Thr). Also edits incorrectly charged L-seryl-tRNA(Thr). This Leptothrix cholodnii (strain ATCC 51168 / LMG 8142 / SP-6) (Leptothrix discophora (strain SP-6)) protein is Threonine--tRNA ligase.